Reading from the N-terminus, the 91-residue chain is MARSIKKGPFIDAHLLKKVDAARASNDKRPIKTWSRRSTVLPDFVGLTIAVHNGRQHIPVYVSENMVGHKLGEFALTRTFKGHAASKKAKR.

Belongs to the universal ribosomal protein uS19 family.

Functionally, protein S19 forms a complex with S13 that binds strongly to the 16S ribosomal RNA. The sequence is that of Small ribosomal subunit protein uS19 from Azoarcus sp. (strain BH72).